Here is a 412-residue protein sequence, read N- to C-terminus: Delta-aminolevulinic acid dehydratase, chloroplastic (412 aa).

The transit peptide at 1-48 directs the protein to the chloroplast; that stretch reads MASSIPNAPSAFNSQSYVGLRAPLRTFNFSSPQAAKIPRSQRLFVVRA. A disordered region spans residues 68–101; the sequence is VRPRPAAPVGTPVVPSLPLHRRPRRNRKSPALRS. The segment covering 86 to 97 has biased composition (basic residues); the sequence is LHRRPRRNRKSP. The active-site Schiff-base intermediate with substrate is K280. 5-aminolevulinate contacts are provided by R290 and K302. E318 provides a ligand contact to Mg(2+). The active-site Schiff-base intermediate with substrate is K333. S359 and Y398 together coordinate 5-aminolevulinate.

This sequence belongs to the ALAD family. In terms of assembly, homooctamer. It depends on Mg(2+) as a cofactor. As to expression, leaves and root nodules.

It is found in the plastid. The protein localises to the chloroplast. It carries out the reaction 2 5-aminolevulinate = porphobilinogen + 2 H2O + H(+). The protein operates within porphyrin-containing compound metabolism; protoporphyrin-IX biosynthesis; coproporphyrinogen-III from 5-aminolevulinate: step 1/4. In terms of biological role, is committed to plant tetrapyrrole synthesis. Its function is as follows. Catalyzes an early step in the biosynthesis of tetrapyrroles. Binds two molecules of 5-aminolevulinate per subunit, each at a distinct site, and catalyzes their condensation to form porphobilinogen. In Glycine max (Soybean), this protein is Delta-aminolevulinic acid dehydratase, chloroplastic (HEMB).